The primary structure comprises 605 residues: MAIKQLSETLINQIAAGEVIERPASAAKELIENALDAGATRIEIATAGGGKTLLRVTDNGLGMSPADLELAIRRHCTSKLDGSLADIRTLGFRGEALPSIGSVARLSITTRTAEAREGATITITGGRSDPVRPSAAVVGTVVEVRELFFATPARLKFMKSERAETAAISEVVRRMAIAFPKVRFVLSGSDRSALEFPATGDDRLARMAQVLGRDFRDNAIEIDAEREGARLTGFAGVPTFNRGNSLQQYAFVNGRPVQDKLIMSAIRAAYAETVPQGRYPVAVLSLTIDPALVDVNVHPAKSDVRFRDPGLIRGLIIGAIREALMREGDRAATTGAQGLMRAFRPEFHRGDQQRPQEPWTAATSPYRPFSPGGAARGFAETPQAAFSDFAQPSARNAAVPVDSIQAADGQAASFPLGAARAQLHENYIVAQTDDGLVIVDQHAAHERLVFETMRTALHARPVPAQALLIPEIVDLPEEDCDRLVAHAGEFTRLGLAIERFGPAAIAVRETPAMLGEMDAAGLVRQLADELAEWDTADGLAGRLEYLAATMACHGSVRSGRRLRTEEMNALLRRMEATPGSGQCNHGRPTYIELKLADIERLFGRS.

Belongs to the DNA mismatch repair MutL/HexB family.

Its function is as follows. This protein is involved in the repair of mismatches in DNA. It is required for dam-dependent methyl-directed DNA mismatch repair. May act as a 'molecular matchmaker', a protein that promotes the formation of a stable complex between two or more DNA-binding proteins in an ATP-dependent manner without itself being part of a final effector complex. This chain is DNA mismatch repair protein MutL, found in Sinorhizobium medicae (strain WSM419) (Ensifer medicae).